The chain runs to 343 residues: Thromboxane A2 receptor (343 aa).

Residues 1–29 are Extracellular-facing; it reads MWPNGSSLGPCFRPTNITLEERRLIASPW. N-linked (GlcNAc...) asparagine glycosylation is found at N4 and N16. The helical transmembrane segment at 30–52 threads the bilayer; that stretch reads FAASFCVVGLASNLLALSVLAGA. The Cytoplasmic segment spans residues 53–66; sequence RQGGSHTRSSFLTF. Residues 67–87 form a helical membrane-spanning segment; that stretch reads LCGLVLTDFLGLLVTGTIVVS. The Extracellular segment spans residues 88–106; the sequence is QHAALFEWHAVDPGCRLCR. An intrachain disulfide couples C105 to C183. Residues 107-128 traverse the membrane as a helical segment; it reads FMGVVMIFFGLSPLLLGAAMAS. The Cytoplasmic portion of the chain corresponds to 129–149; it reads ERYLGITRPFSRPAVASQRRA. Residues 150–172 traverse the membrane as a helical segment; that stretch reads WATVGLVWAAALALGLLPLLGVG. The Extracellular portion of the chain corresponds to 173 to 193; the sequence is RYTVQYPGSWCFLTLGAESGD. A helical membrane pass occupies residues 194-219; that stretch reads VAFGLLFSMLGGLSVGLSFLLNTVSV. The Cytoplasmic portion of the chain corresponds to 220–246; the sequence is ATLCHVYHGQEAAQQRPRDSEVEMMAQ. The chain crosses the membrane as a helical span at residues 247–270; that stretch reads LLGIMVVASVCWLPLLVFIAQTVL. Residues 271–289 lie on the Extracellular side of the membrane; that stretch reads RNPPAMSPAGQLSRTTEKE. The chain crosses the membrane as a helical span at residues 290–311; sequence LLIYLRVATWNQILDPWVYILF. Residues 312–343 are Cytoplasmic-facing; it reads RRAVLRRLQPRLSTRPRSLSLQPQLTQRSGLQ. 2 positions are modified to phosphoserine: S329 and S331.

This sequence belongs to the G-protein coupled receptor 1 family. As to quaternary structure, interacts with RPGRIP1L. Interacts with PSMA3. Interacts with RACK1; the interaction regulates TBXA2R cell surface expression.

It is found in the cell membrane. Its function is as follows. Receptor for thromboxane A2 (TXA2), a potent stimulator of platelet aggregation. The activity of this receptor is mediated by a G-protein that activates a phosphatidylinositol-calcium second messenger system. In the kidney, the binding of TXA2 to glomerular TP receptors causes intense vasoconstriction. Activates phospholipase C. Activates adenylyl cyclase. Functionally, inhibits adenylyl cyclase. This chain is Thromboxane A2 receptor (TBXA2R), found in Homo sapiens (Human).